The sequence spans 298 residues: 4-hydroxy-tetrahydrodipicolinate synthase (298 aa).

A pyruvate-binding site is contributed by threonine 51. Tyrosine 139 (proton donor/acceptor) is an active-site residue. Lysine 167 serves as the catalytic Schiff-base intermediate with substrate. Isoleucine 209 contacts pyruvate.

It belongs to the DapA family. Homotetramer; dimer of dimers.

The protein localises to the cytoplasm. The enzyme catalyses L-aspartate 4-semialdehyde + pyruvate = (2S,4S)-4-hydroxy-2,3,4,5-tetrahydrodipicolinate + H2O + H(+). Its pathway is amino-acid biosynthesis; L-lysine biosynthesis via DAP pathway; (S)-tetrahydrodipicolinate from L-aspartate: step 3/4. Functionally, catalyzes the condensation of (S)-aspartate-beta-semialdehyde [(S)-ASA] and pyruvate to 4-hydroxy-tetrahydrodipicolinate (HTPA). This is 4-hydroxy-tetrahydrodipicolinate synthase from Haemophilus influenzae (strain PittGG).